A 285-amino-acid polypeptide reads, in one-letter code: MSTIIDGKAIAAKLRAEIATEVKILKEKGIIPGLATVLVGEDPASEVYVRMKGNACQELGMHSVKHTLPATTTEAELLALVARLNSDPTIHGILVQLPLPKQINSDTILEAISPVKDVDGFHPYNVGRLMVGKPTFQPCTPYGVMVMLREAGVDLAGKEVVVVGRSNIVGKPVALMCLQQHATVTICHSKTRDLPSKVKEADVVIAAVGVPEMIKGEWIKEGAVVIDVGVNRVGEKKLVGDVEFAAASQRASAITPVPGGVGPMTITMLLYNTLEAAKKTGEGNR.

Residues 164-166 (GRS), Ser189, and Val230 contribute to the NADP(+) site.

The protein belongs to the tetrahydrofolate dehydrogenase/cyclohydrolase family. As to quaternary structure, homodimer.

The enzyme catalyses (6R)-5,10-methylene-5,6,7,8-tetrahydrofolate + NADP(+) = (6R)-5,10-methenyltetrahydrofolate + NADPH. It catalyses the reaction (6R)-5,10-methenyltetrahydrofolate + H2O = (6R)-10-formyltetrahydrofolate + H(+). It participates in one-carbon metabolism; tetrahydrofolate interconversion. Catalyzes the oxidation of 5,10-methylenetetrahydrofolate to 5,10-methenyltetrahydrofolate and then the hydrolysis of 5,10-methenyltetrahydrofolate to 10-formyltetrahydrofolate. This Geobacter metallireducens (strain ATCC 53774 / DSM 7210 / GS-15) protein is Bifunctional protein FolD 2.